Consider the following 816-residue polypeptide: Transcription factor qa-1f (816 aa).

The zn(2)-C6 fungal-type DNA-binding region spans 76-103 (CDQCRAAREKCDGIQPACFPCVSQGRSC). Residues 184–202 (SGQAAQDPSEDGQSPSEDI) show a composition bias toward polar residues. The interval 184–235 (SGQAAQDPSEDGQSPSEDINVQDAGAKTSDFPHAPHLTFSAPKSSTAETRTL) is disordered.

The protein localises to the nucleus. In terms of biological role, transcription activator; part of the qa gene cluster that mediates the catabolism of quinic acid (QA) and as such, allows the use of QA as a sole carbon source. Activates the expression of qa cluster genes by binding to a 16 base-pair consensus sequence 5'-GGRTAARYRYTTAYCC-3' present in the promoters of the target genes. Regulates its own expression. May regulate the expression of many other genes inclusing genes with products in 8 mutually connected metabolic pathways: (1) starch and sucrose metabolism; (2) glycolysis/glucanogenesis; (3) TCA Cycle; (4) butanoate metabolism; (5) pyruvate metabolism; (6) aromatic amino acid and QA metabolism; (7) valine, leucine, and isoleucine degradation; and (8) transport of sugars and amino acids. The chain is Transcription factor qa-1f from Neurospora crassa (strain ATCC 24698 / 74-OR23-1A / CBS 708.71 / DSM 1257 / FGSC 987).